A 931-amino-acid chain; its full sequence is Netrin receptor UNC5C (931 aa).

The N-terminal stretch at 1-40 (MRKGLRATAARCGLGLGYLLQMLVLPALALLSASGTGSAA) is a signal peptide. At 41–380 (QDDEFFHELP…APDSDDVALY (340 aa)) the chain is on the extracellular side. The Ig-like domain occupies 62–159 (PHFLIEPEEA…AGTTKSRKAY (98 aa)). Disulfide bonds link Cys83/Cys144, Cys95/Cys142, Cys188/Cys239, Cys272/Cys309, Cys276/Cys313, Cys287/Cys299, Cys328/Cys362, Cys332/Cys367, and Cys340/Cys352. One can recognise an Ig-like C2-type domain in the interval 161–256 (RIAYLRKTFE…KRKSTTATVI (96 aa)). Residue Asn236 is glycosylated (N-linked (GlcNAc...) asparagine). 2 consecutive TSP type-1 domains span residues 260-314 (NGGW…TLCP) and 316-368 (DGRW…GLCM). N-linked (GlcNAc...) asparagine glycosylation occurs at Asn361. Residues 381–401 (VGIVIAVTVCLAITVVVALFV) traverse the membrane as a helical segment. Topologically, residues 402–931 (YRKNHRDFES…VVSLAAEGQY (530 aa)) are cytoplasmic. The tract at residues 402–931 (YRKNHRDFES…VVSLAAEGQY (530 aa)) is required for netrin-mediated axon repulsion of neuronal growth cones. A Phosphoserine modification is found at Ser502. One can recognise a ZU5 domain in the interval 530–673 (CTAFGTFNSL…LSTYALVGQS (144 aa)). Tyr568 is modified (phosphotyrosine). Residues 694-712 (SLEYSIRVYCLDDTQDALK) form an interaction with DCC region. In terms of domain architecture, Death spans 850–929 (QKLCSSLDAP…ETVVSLAAEG (80 aa)).

It belongs to the unc-5 family. In terms of assembly, interacts with DCC (via cytoplasmic domain). Interacts (tyrosine phosphorylated form) with PTPN11. Interacts (via extracellular domain) with FLRT3 (via extracellular domain). Interacts (via Ig-like C2-type domain) with DSCAM (via extracellular domain). Interacts (via death domain) with DAPK1. Interacts (via cytoplasmic domain) with TUBB3; this interaction is decreased by NTN1/Netrin-1. Post-translationally, phosphorylated on different cytoplasmic tyrosine residues. Phosphorylation of Tyr-568 leads to an interaction with PTPN11 phosphatase, suggesting that its activity is regulated by phosphorylation/dephosphorylation. Tyrosine phosphorylation is netrin-dependent. Proteolytically cleaved by caspases during apoptosis. The cleavage does not take place when the receptor is associated with netrin ligand. Its cleavage by caspases is required to induce apoptosis. Expressed in cortical and cerebellar neurons, including cells of the external and internal granular layer and of the Purkinje cell layer (at protein level). Mainly expressed in regions of differentiating neurons. Highly expressed in brain and lung. Expressed in the cerebellum and the neurons of the hippocampus, with enrichment in neurons of the CA3 hippocampal pyramidal layer. Weakly expressed in testis, ovary, spleen, thymus and bladder. Expressed at very low level in kidney, intestine and salivary gland.

Its subcellular location is the cell membrane. It is found in the cell surface. It localises to the synapse. The protein localises to the synaptosome. The protein resides in the cell projection. Its subcellular location is the dendrite. It is found in the axon. It localises to the growth cone. The protein localises to the lamellipodium. The protein resides in the filopodium. Its function is as follows. Receptor for netrin required for axon guidance. Mediates axon repulsion of neuronal growth cones in the developing nervous system upon ligand binding. NTN1/Netrin-1 binding might cause dissociation of UNC5C from polymerized TUBB3 in microtubules and thereby lead to increased microtubule dynamics and axon repulsion. Axon repulsion in growth cones may also be caused by its association with DCC that may trigger signaling for repulsion. Might also collaborate with DSCAM in NTN1-mediated axon repulsion independently of DCC. Also involved in corticospinal tract axon guidance independently of DCC. Involved in dorsal root ganglion axon projection towards the spinal cord. It also acts as a dependence receptor required for apoptosis induction when not associated with netrin ligand. This chain is Netrin receptor UNC5C (Unc5c), found in Mus musculus (Mouse).